The primary structure comprises 441 residues: tRNA(Ile)-lysidine synthase (441 aa).

Residue 28-33 (SGGTDS) participates in ATP binding.

Belongs to the tRNA(Ile)-lysidine synthase family.

It is found in the cytoplasm. It catalyses the reaction cytidine(34) in tRNA(Ile2) + L-lysine + ATP = lysidine(34) in tRNA(Ile2) + AMP + diphosphate + H(+). Ligates lysine onto the cytidine present at position 34 of the AUA codon-specific tRNA(Ile) that contains the anticodon CAU, in an ATP-dependent manner. Cytidine is converted to lysidine, thus changing the amino acid specificity of the tRNA from methionine to isoleucine. This chain is tRNA(Ile)-lysidine synthase, found in Orientia tsutsugamushi (strain Boryong) (Rickettsia tsutsugamushi).